The chain runs to 329 residues: Phenylalanine--tRNA ligase alpha subunit (329 aa).

Position 253 (Glu253) interacts with Mg(2+).

It belongs to the class-II aminoacyl-tRNA synthetase family. Phe-tRNA synthetase alpha subunit type 1 subfamily. Tetramer of two alpha and two beta subunits. It depends on Mg(2+) as a cofactor.

The protein localises to the cytoplasm. It carries out the reaction tRNA(Phe) + L-phenylalanine + ATP = L-phenylalanyl-tRNA(Phe) + AMP + diphosphate + H(+). The chain is Phenylalanine--tRNA ligase alpha subunit from Teredinibacter turnerae (strain ATCC 39867 / T7901).